The primary structure comprises 436 residues: 3-ketoacyl-CoA thiolase (436 aa).

Cysteine 99 functions as the Acyl-thioester intermediate in the catalytic mechanism. Catalysis depends on proton acceptor residues histidine 392 and cysteine 422.

The protein belongs to the thiolase-like superfamily. Thiolase family. Heterotetramer of two alpha chains (FadJ) and two beta chains (FadI).

It is found in the cytoplasm. It carries out the reaction an acyl-CoA + acetyl-CoA = a 3-oxoacyl-CoA + CoA. It participates in lipid metabolism; fatty acid beta-oxidation. Functionally, catalyzes the final step of fatty acid oxidation in which acetyl-CoA is released and the CoA ester of a fatty acid two carbons shorter is formed. The protein is 3-ketoacyl-CoA thiolase of Shewanella halifaxensis (strain HAW-EB4).